The following is a 480-amino-acid chain: Protein nucleotidyltransferase YdiU (480 aa).

The ATP site is built by Gly-86, Gly-88, Arg-89, Lys-109, Asp-121, Gly-122, Arg-172, and Arg-179. Residue Asp-248 is the Proton acceptor of the active site. Positions 249 and 258 each coordinate Mg(2+). Asp-258 is a binding site for ATP.

This sequence belongs to the SELO family. It depends on Mg(2+) as a cofactor. Requires Mn(2+) as cofactor.

It catalyses the reaction L-seryl-[protein] + ATP = 3-O-(5'-adenylyl)-L-seryl-[protein] + diphosphate. The catalysed reaction is L-threonyl-[protein] + ATP = 3-O-(5'-adenylyl)-L-threonyl-[protein] + diphosphate. It carries out the reaction L-tyrosyl-[protein] + ATP = O-(5'-adenylyl)-L-tyrosyl-[protein] + diphosphate. The enzyme catalyses L-histidyl-[protein] + UTP = N(tele)-(5'-uridylyl)-L-histidyl-[protein] + diphosphate. It catalyses the reaction L-seryl-[protein] + UTP = O-(5'-uridylyl)-L-seryl-[protein] + diphosphate. The catalysed reaction is L-tyrosyl-[protein] + UTP = O-(5'-uridylyl)-L-tyrosyl-[protein] + diphosphate. Its function is as follows. Nucleotidyltransferase involved in the post-translational modification of proteins. It can catalyze the addition of adenosine monophosphate (AMP) or uridine monophosphate (UMP) to a protein, resulting in modifications known as AMPylation and UMPylation. This chain is Protein nucleotidyltransferase YdiU, found in Salmonella choleraesuis (strain SC-B67).